A 217-amino-acid polypeptide reads, in one-letter code: Glycosylphosphatidylinositol anchor biosynthesis protein 11 (217 aa).

6 helical membrane passes run 45-61 (TWQTIPFHLIVLSYWFI), 74-94 (WLLVPCQVLYLALQFNPATVY), 111-131 (VTCILLTIPCMLLVVLFGAPF), 138-158 (TWLLSLHCCVLSYPAVYSVLN), 169-189 (YFISIAVGCWISCLAIPLDWD), and 195-215 (WPIPLVVGAQLGAMFGYTFCS).

It belongs to the PIGF family.

The protein localises to the endoplasmic reticulum membrane. It functions in the pathway glycolipid biosynthesis; glycosylphosphatidylinositol-anchor biosynthesis. Its function is as follows. Acts in the GPI biosynthetic pathway between GlcNAc-PI synthesis and GPI transfer to protein. This Eremothecium gossypii (strain ATCC 10895 / CBS 109.51 / FGSC 9923 / NRRL Y-1056) (Yeast) protein is Glycosylphosphatidylinositol anchor biosynthesis protein 11 (GPI11).